A 149-amino-acid polypeptide reads, in one-letter code: UPF0306 protein PM1958 (149 aa).

This sequence belongs to the UPF0306 family.

The protein is UPF0306 protein PM1958 of Pasteurella multocida (strain Pm70).